Consider the following 160-residue polypeptide: Protein cornichon homolog 2 (160 aa).

Residues 1-10 (MAFTFAAFCY) are Cytoplasmic-facing. A helical membrane pass occupies residues 11 to 31 (MLTLVLCASLIFFVIWHIIAF). Topologically, residues 32–72 (DELRTDFKNPIDQGNPARARERLKNIERICCLLRKLVVPEY) are lumenal. The helical transmembrane segment at 73–93 (SIHGLFCLMFLCAAEWVTLGL) threads the bilayer. Residues 94–138 (NIPLLFYHLWRYFHRPADGSEVMYDAVSIMNADILNYCQKESWCK) are Cytoplasmic-facing. A helical transmembrane segment spans residues 139-159 (LAFYLLSFFYYLYSMVYTLVS). Residue Phe160 is a topological domain, lumenal.

The protein belongs to the cornichon family. Acts as an auxiliary subunit for AMPA-selective glutamate receptors (AMPARs). Found in a complex with GRIA1, GRIA2, GRIA3, GRIA4, CNIH3, CACNG2, CACNG3, CACNG4, CACNG5, CACNG7 and CACNG8. Interacts with CACGN8. Interacts with GRIA1. Found in a complex with GRIA1, GRIA2, GRIA3, GRIA4, DLG4 and CACNG8. In terms of tissue distribution, expression is up-regulated in dorsolateral prefrontal cortex of patients with schizophrenia (postmortem brain study).

It localises to the endoplasmic reticulum membrane. It is found in the postsynaptic cell membrane. The protein localises to the cell projection. The protein resides in the dendrite. Its subcellular location is the dendritic spine. It localises to the postsynaptic density. Its function is as follows. Regulates the trafficking and gating properties of AMPA-selective glutamate receptors (AMPARs). Promotes their targeting to the cell membrane and synapses and modulates their gating properties by regulating their rates of activation, deactivation and desensitization. Blocks CACNG8-mediated resensitization of AMPA receptors. The protein is Protein cornichon homolog 2 of Homo sapiens (Human).